The primary structure comprises 226 residues: Elongation factor 1-delta (226 aa).

Positions 82–131 (SSVATPPVADTKASAAEDDDDDDVDLFGEETEEEKKASEERAAAVKASGK) are disordered. Residues 97–113 (AEDDDDDDVDLFGEETE) are compositionally biased toward acidic residues. Over residues 114 to 124 (EEKKASEERAA) the composition is skewed to basic and acidic residues.

It belongs to the EF-1-beta/EF-1-delta family. As to quaternary structure, EF-1 is composed of 4 subunits: alpha, beta (1B-alpha=beta'), delta (1B-beta), and gamma (1B-gamma).

Functionally, EF-1-beta and EF-1-beta' stimulate the exchange of GDP bound to EF-1-alpha to GTP. This Spuriopimpinella brachycarpa (Chamnamul) protein is Elongation factor 1-delta.